We begin with the raw amino-acid sequence, 116 residues long: Putative transmembrane protein ORF116 (116 aa).

3 consecutive transmembrane segments (helical) span residues 20 to 40 (IVTL…AYAL), 53 to 73 (LLGG…TNSI), and 76 to 96 (FRGA…DVIN).

It localises to the host membrane. The sequence is that of Putative transmembrane protein ORF116 from Acidianus bottle-shaped virus (isolate Italy/Pozzuoli) (ABV).